The chain runs to 178 residues: Hypoxanthine-guanine phosphoribosyltransferase (178 aa).

Residues Lys46 and Gly47 each contribute to the diphosphate site. Asp103 contributes to the Mg(2+) binding site. Asp106 serves as the catalytic Proton acceptor. GMP-binding positions include Lys134, 155-156, and Asp162; that span reads FL. A diphosphate-binding site is contributed by Arg168.

This sequence belongs to the purine/pyrimidine phosphoribosyltransferase family. Mg(2+) serves as cofactor.

It is found in the cytoplasm. It catalyses the reaction IMP + diphosphate = hypoxanthine + 5-phospho-alpha-D-ribose 1-diphosphate. The enzyme catalyses GMP + diphosphate = guanine + 5-phospho-alpha-D-ribose 1-diphosphate. It participates in purine metabolism; IMP biosynthesis via salvage pathway; IMP from hypoxanthine: step 1/1. The protein operates within purine metabolism; GMP biosynthesis via salvage pathway; GMP from guanine: step 1/1. Its function is as follows. Purine salvage pathway enzyme that catalyzes the transfer of the ribosyl-5-phosphate group from 5-phospho-alpha-D-ribose 1-diphosphate (PRPP) to the N9 position of the 6-oxopurines hypoxanthine and guanine to form the corresponding ribonucleotides IMP (inosine 5'-monophosphate) and GMP (guanosine 5'-monophosphate), with the release of PPi. The sequence is that of Hypoxanthine-guanine phosphoribosyltransferase (hpt) from Aquifex aeolicus (strain VF5).